The sequence spans 446 residues: tRNA modification GTPase MnmE (446 aa).

The (6S)-5-formyl-5,6,7,8-tetrahydrofolate site is built by R22, E80, and R119. Positions 215 to 370 (GFKVAIIGKP…LILALENIMN (156 aa)) constitute a TrmE-type G domain. Residue N225 coordinates K(+). GTP is bound by residues 225–230 (NVGKSS), 244–250 (SDIAGTT), and 269–272 (DTAG). S229 lines the Mg(2+) pocket. K(+) contacts are provided by S244, I246, and T249. T250 is a Mg(2+) binding site. Residue K446 coordinates (6S)-5-formyl-5,6,7,8-tetrahydrofolate.

The protein belongs to the TRAFAC class TrmE-Era-EngA-EngB-Septin-like GTPase superfamily. TrmE GTPase family. As to quaternary structure, homodimer. Heterotetramer of two MnmE and two MnmG subunits. K(+) serves as cofactor.

The protein resides in the cytoplasm. Functionally, exhibits a very high intrinsic GTPase hydrolysis rate. Involved in the addition of a carboxymethylaminomethyl (cmnm) group at the wobble position (U34) of certain tRNAs, forming tRNA-cmnm(5)s(2)U34. This chain is tRNA modification GTPase MnmE, found in Sulfurimonas denitrificans (strain ATCC 33889 / DSM 1251) (Thiomicrospira denitrificans (strain ATCC 33889 / DSM 1251)).